The following is a 439-amino-acid chain: MKKPLRWLAALTVLLLPLSALAQQQGLTIDIVGGSASATPIAVIPMPYQGSGTAPQTDVSAVVGADLDRSGQFRTLPAAQIVEKPTRGTEVQFQTWRTLKQNYIVVGRVMDAGEGAYRVEYELFDVAKGERMLGLAMTARANAMRDVSHQMADAIYEKITGVRGAFWTRIAYVTASGKGGAMRYALMVADSDGYNPQTIVRSAEPLLSPNWSPDGKKLAYVSFERGNSSIYLQDIATGARELVSSFRGINGAPSFSPDGRRLALALSRSGNPEIYVMDLGSKQLTQLTNHFGIDTEPTWAPDGGSIYFTSDRGGRPQIYQVAASGGSANRVTFQGNYNATASVSFDGKKIAVAQGSGNTYRIAMMDRSLGSPSWSTLSPGSLDESPSFAPNASMVLYAAREGGRGVLYAVSSDARVRQRLVLADGDVREPAWGPYRTAH.

An N-terminal signal peptide occupies residues 1–22 (MKKPLRWLAALTVLLLPLSALA).

It belongs to the TolB family. The Tol-Pal system is composed of five core proteins: the inner membrane proteins TolA, TolQ and TolR, the periplasmic protein TolB and the outer membrane protein Pal. They form a network linking the inner and outer membranes and the peptidoglycan layer.

It is found in the periplasm. Functionally, part of the Tol-Pal system, which plays a role in outer membrane invagination during cell division and is important for maintaining outer membrane integrity. The polypeptide is Tol-Pal system protein TolB (Xanthomonas oryzae pv. oryzae (strain KACC10331 / KXO85)).